A 435-amino-acid chain; its full sequence is MQVQLETLSNLERRMNIALPMAAIETQVAERLKRVARGAKIQGFRPGKAPLKIVEMNYGAQVREEVMGEQVQQGFYKAVTEQSLRVAGYPRFEPVAAGDDKESFKFAATFEIYPEVKVGELAGKEIEKPNTVVGDAEIEKTIDILRKQRTRYNRVEREAAEGDRVIIDFKGAIDGVAFEGGSSENFPFVLGQGQMLAEFEAGIVGAKEGDIKTVEVNFPEDYHGKDVAGKTAVFEILVKNVAEATLPEVNEEFAKALGISDGDVEKMRGEIRKNVEREVKRRLQARIKENVMQALIDATELELPKALVSLEIGRLVEQARRDMQQRGMNVKDMPFPPELFAAQAERRVKLGLILSEIVEANKLEAKPEQVRAMITEFADSYEQPEDVLAWYYESADRLEGPTSMVLEDNVVEFVLSQANVVAKDLSFDELMGSQA.

Positions 162–247 (GDRVIIDFKG…VKNVAEATLP (86 aa)) constitute a PPIase FKBP-type domain.

It belongs to the FKBP-type PPIase family. Tig subfamily.

Its subcellular location is the cytoplasm. The enzyme catalyses [protein]-peptidylproline (omega=180) = [protein]-peptidylproline (omega=0). Involved in protein export. Acts as a chaperone by maintaining the newly synthesized protein in an open conformation. Functions as a peptidyl-prolyl cis-trans isomerase. This is Trigger factor from Chromobacterium violaceum (strain ATCC 12472 / DSM 30191 / JCM 1249 / CCUG 213 / NBRC 12614 / NCIMB 9131 / NCTC 9757 / MK).